Here is a 92-residue protein sequence, read N- to C-terminus: MTRSVWKGPFVDGYLLKKAEKARASGRNEIIKIWSRRSTILPQFVGLTFGVYNGQKFLPVLVTENMIGHKFGEFSPTRTFYGHAADKKAKRK.

This sequence belongs to the universal ribosomal protein uS19 family.

Protein S19 forms a complex with S13 that binds strongly to the 16S ribosomal RNA. The polypeptide is Small ribosomal subunit protein uS19 (Rhodospirillum centenum (strain ATCC 51521 / SW)).